A 253-amino-acid polypeptide reads, in one-letter code: Imidazole glycerol phosphate synthase subunit HisF (253 aa).

Catalysis depends on residues aspartate 11 and aspartate 130.

This sequence belongs to the HisA/HisF family. As to quaternary structure, heterodimer of HisH and HisF.

It localises to the cytoplasm. The catalysed reaction is 5-[(5-phospho-1-deoxy-D-ribulos-1-ylimino)methylamino]-1-(5-phospho-beta-D-ribosyl)imidazole-4-carboxamide + L-glutamine = D-erythro-1-(imidazol-4-yl)glycerol 3-phosphate + 5-amino-1-(5-phospho-beta-D-ribosyl)imidazole-4-carboxamide + L-glutamate + H(+). Its pathway is amino-acid biosynthesis; L-histidine biosynthesis; L-histidine from 5-phospho-alpha-D-ribose 1-diphosphate: step 5/9. In terms of biological role, IGPS catalyzes the conversion of PRFAR and glutamine to IGP, AICAR and glutamate. The HisF subunit catalyzes the cyclization activity that produces IGP and AICAR from PRFAR using the ammonia provided by the HisH subunit. In Cereibacter sphaeroides (strain ATCC 17025 / ATH 2.4.3) (Rhodobacter sphaeroides), this protein is Imidazole glycerol phosphate synthase subunit HisF.